We begin with the raw amino-acid sequence, 434 residues long: Glutamate-1-semialdehyde 2,1-aminomutase 1 (434 aa).

The residue at position 270 (lysine 270) is an N6-(pyridoxal phosphate)lysine.

This sequence belongs to the class-III pyridoxal-phosphate-dependent aminotransferase family. HemL subfamily. Homodimer. Requires pyridoxal 5'-phosphate as cofactor.

The protein resides in the cytoplasm. The enzyme catalyses (S)-4-amino-5-oxopentanoate = 5-aminolevulinate. It functions in the pathway porphyrin-containing compound metabolism; protoporphyrin-IX biosynthesis; 5-aminolevulinate from L-glutamyl-tRNA(Glu): step 2/2. The polypeptide is Glutamate-1-semialdehyde 2,1-aminomutase 1 (Bacillus thuringiensis (strain Al Hakam)).